The primary structure comprises 348 residues: 3-isopropylmalate dehydrogenase (348 aa).

76-87 provides a ligand contact to NAD(+); sequence GPKWTDPNNRPE. Residues arginine 94, arginine 104, arginine 132, and aspartate 217 each coordinate substrate. Residues aspartate 217, aspartate 241, and aspartate 245 each contribute to the Mg(2+) site. 275 to 287 is an NAD(+) binding site; it reads GSAPDIAGKNVAN.

The protein belongs to the isocitrate and isopropylmalate dehydrogenases family. LeuB type 1 subfamily. In terms of assembly, homodimer. Requires Mg(2+) as cofactor. Mn(2+) is required as a cofactor.

It is found in the cytoplasm. It carries out the reaction (2R,3S)-3-isopropylmalate + NAD(+) = 4-methyl-2-oxopentanoate + CO2 + NADH. It functions in the pathway amino-acid biosynthesis; L-leucine biosynthesis; L-leucine from 3-methyl-2-oxobutanoate: step 3/4. In terms of biological role, catalyzes the oxidation of 3-carboxy-2-hydroxy-4-methylpentanoate (3-isopropylmalate) to 3-carboxy-4-methyl-2-oxopentanoate. The product decarboxylates to 4-methyl-2 oxopentanoate. The protein is 3-isopropylmalate dehydrogenase of Staphylococcus aureus (strain MW2).